The following is a 235-amino-acid chain: Small ribosomal subunit protein uS2c (235 aa).

The protein belongs to the universal ribosomal protein uS2 family.

The protein localises to the plastid. The protein resides in the chloroplast. The polypeptide is Small ribosomal subunit protein uS2c (rps2) (Marchantia polymorpha (Common liverwort)).